A 476-amino-acid chain; its full sequence is Serine/threonine-protein kinase Chk1 (476 aa).

The interaction with CLSPN stretch occupies residues 1 to 265; the sequence is MAVPFVEDWD…IPDIKKDRWY (265 aa). In terms of domain architecture, Protein kinase spans 9–265; that stretch reads WDLVQTLGEG…IPDIKKDRWY (257 aa). ATP-binding positions include 15–23 and Lys-38; that span reads LGEGAYGEV. The active-site Proton acceptor is the Asp-130. A Glycyl lysine isopeptide (Lys-Gly) (interchain with G-Cter in ubiquitin) cross-link involves residue Lys-132. The disordered stretch occupies residues 267–331; sequence KPLNRGAKRP…RTGLSLWDTG (65 aa). A Phosphoserine; by PKB/AKT1 modification is found at Ser-280. The span at 280–291 shows a compositional bias: low complexity; the sequence is SGGMSESSSGFS. Phosphoserine is present on residues Ser-286, Ser-296, and Ser-301. Residues 298 to 320 are compositionally biased toward polar residues; that stretch reads LDFSPVNNGSSEETVKFSSSQPE. Ser-317 is modified (phosphoserine; by ATM and ATR). Ser-345 carries the phosphoserine; by ATR modification. The interval 391-476 is autoinhibitory region; it reads QCLKETFEKL…SSQKVWFPVT (86 aa). Lys-436 participates in a covalent cross-link: Glycyl lysine isopeptide (Lys-Gly) (interchain with G-Cter in ubiquitin). A phosphoserine mark is found at Ser-463, Ser-467, and Ser-468.

It belongs to the protein kinase superfamily. CAMK Ser/Thr protein kinase family. NIM1 subfamily. In terms of assembly, interacts (phosphorylated by ATR) with RAD51. Interacts with and phosphorylates CLSPN, an adapter protein that regulates the ATR-dependent phosphorylation of CHEK1. Interacts with BRCA1. Interacts with and phosphorylates CDC25A, CDC25B and CDC25C. Interacts with FBXO6, which regulates CHEK1. Interacts with PPM1D, which regulates CHEK1 through dephosphorylation. Interacts with TIMELESS; DNA damage-dependent. Interacts with FEM1B; activates CHEK1 in response to stress. Interacts with TLK1. Interacts with XPO1 and YWHAZ. Interacts with CDK5RAP3; antagonizes CHEK1. Post-translationally, phosphorylated by ATR in a RAD17-dependent manner in response to ultraviolet irradiation and inhibition of DNA replication. Phosphorylated by ATM in response to ionizing irradiation. ATM and ATR can both phosphorylate Ser-317 and Ser-345 and this results in enhanced kinase activity. Phosphorylation at Ser-345 induces a change in the conformation of the protein, activates the kinase activity and is a prerequisite for interaction with FBXO6 and subsequent ubiquitination at Lys-436. Phosphorylation at Ser-345 also increases binding to 14-3-3 proteins and promotes nuclear retention. Conversely, dephosphorylation at Ser-345 by PPM1D may contribute to exit from checkpoint mediated cell cycle arrest. Phosphorylation at Ser-280 by AKT1/PKB, may promote mono and/or diubiquitination. Also phosphorylated at undefined residues during mitotic arrest, resulting in decreased activity. In terms of processing, ubiquitinated. Mono or diubiquitination promotes nuclear exclusion. The activated form (phosphorylated on Ser-345) is polyubiquitinated at Lys-436 by some SCF-type E3 ubiquitin ligase complex containing FBXO6 promoting its degradation. Ubiquitination and degradation are required to terminate the checkpoint and ensure that activated CHEK1 does not accumulate as cells progress through S phase, when replication forks encounter transient impediments during normal DNA replication. 'Lys-63'-mediated ubiquitination by TRAF4 at Lys-132 activates cell cycle arrest and activation of DNA repair. Proteolytically cleaved at the C-terminus by SPRTN during normal DNA replication, thereby promoting CHEK1 removal from chromatin and activating the protein kinase activity. In terms of tissue distribution, found in all adult tissues tested. Elevated expression in testis, lung and spleen. 15.5 day old embryos show ubiquitous expression with strong expression in brain, liver, kidney, pancreas, intestine, thymus and lung.

The protein localises to the nucleus. Its subcellular location is the chromosome. It is found in the cytoplasm. It localises to the cytoskeleton. The protein resides in the microtubule organizing center. The protein localises to the centrosome. It catalyses the reaction L-seryl-[protein] + ATP = O-phospho-L-seryl-[protein] + ADP + H(+). It carries out the reaction L-threonyl-[protein] + ATP = O-phospho-L-threonyl-[protein] + ADP + H(+). With respect to regulation, activated through phosphorylation predominantly by ATR but also by ATM in response to DNA damage or inhibition of DNA replication. Activation is modulated by several mediators including CLSPN, BRCA1 and FEM1B. Proteolytic cleavage at the C-terminus by SPRTN during normal DNA replication activates the protein kinase activity. Serine/threonine-protein kinase which is required for checkpoint-mediated cell cycle arrest and activation of DNA repair in response to the presence of DNA damage or unreplicated DNA. May also negatively regulate cell cycle progression during unperturbed cell cycles. This regulation is achieved by a number of mechanisms that together help to preserve the integrity of the genome. Recognizes the substrate consensus sequence [R-X-X-S/T]. Binds to and phosphorylates CDC25A, CDC25B and CDC25C. Phosphorylation of CDC25A at 'Ser-178' and 'Thr-507' and phosphorylation of CDC25C at 'Ser-216' creates binding sites for 14-3-3 proteins which inhibit CDC25A and CDC25C. Phosphorylation of CDC25A at 'Ser-76', 'Ser-124', 'Ser-178', 'Ser-279' and 'Ser-293' promotes proteolysis of CDC25A. Phosphorylation of CDC25A at 'Ser-76' primes the protein for subsequent phosphorylation at 'Ser-79', 'Ser-82' and 'Ser-88' by NEK11, which is required for polyubiquitination and degradation of CDCD25A. Inhibition of CDC25 leads to increased inhibitory tyrosine phosphorylation of CDK-cyclin complexes and blocks cell cycle progression. Also phosphorylates NEK6. Binds to and phosphorylates RAD51 at 'Thr-309', which promotes the release of RAD51 from BRCA2 and enhances the association of RAD51 with chromatin, thereby promoting DNA repair by homologous recombination. Phosphorylates multiple sites within the C-terminus of TP53, which promotes activation of TP53 by acetylation and promotes cell cycle arrest and suppression of cellular proliferation. Also promotes repair of DNA cross-links through phosphorylation of FANCE. Binds to and phosphorylates TLK1 at 'Ser-743', which prevents the TLK1-dependent phosphorylation of the chromatin assembly factor ASF1A. This may enhance chromatin assembly both in the presence or absence of DNA damage. May also play a role in replication fork maintenance through regulation of PCNA. May regulate the transcription of genes that regulate cell-cycle progression through the phosphorylation of histones. Phosphorylates histone H3.1 (to form H3T11ph), which leads to epigenetic inhibition of a subset of genes. May also phosphorylate RB1 to promote its interaction with the E2F family of transcription factors and subsequent cell cycle arrest. Phosphorylates SPRTN, promoting SPRTN recruitment to chromatin. Reduces replication stress and activates the G2/M checkpoint, by phosphorylating and inactivating PABIR1/FAM122A and promoting the serine/threonine-protein phosphatase 2A-mediated dephosphorylation and stabilization of WEE1 levels and activity. The protein is Serine/threonine-protein kinase Chk1 (Chek1) of Mus musculus (Mouse).